The primary structure comprises 241 residues: Eukaryotic translation initiation factor 3 subunit J (241 aa).

The interval 1–94 (MDVSWDADNF…EKTAEEMTPE (94 aa)) is disordered. Over residues 26–45 (GEDEDDNVKESWEDEEEEKK) the composition is skewed to acidic residues. Residues 61-118 (KKKIHDKIAERERQEREKAERLVTEKTAEEMTPEQKLAEKLRQQKLQEESDLRLAMET) are a coiled coil. The segment covering 66–89 (DKIAERERQEREKAERLVTEKTAE) has biased composition (basic and acidic residues).

The protein belongs to the eIF-3 subunit J family. As to quaternary structure, component of the eukaryotic translation initiation factor 3 (eIF-3) complex.

It is found in the cytoplasm. In terms of biological role, component of the eukaryotic translation initiation factor 3 (eIF-3) complex, which is involved in protein synthesis of a specialized repertoire of mRNAs and, together with other initiation factors, stimulates binding of mRNA and methionyl-tRNAi to the 40S ribosome. The eIF-3 complex specifically targets and initiates translation of a subset of mRNAs involved in cell proliferation. This Bombyx mori (Silk moth) protein is Eukaryotic translation initiation factor 3 subunit J.